The primary structure comprises 136 residues: Histone H3.3 (136 aa).

Positions 1-43 (MARTKQTARKSTGGKAPRKQLATKAARKSAPSTGGVKKPHRYR) are disordered. K5 carries the post-translational modification N6,N6,N6-trimethyllysine; alternate. K5 is subject to N6,N6-dimethyllysine; alternate. N6-methyllysine; alternate is present on residues K5 and K10. An N6-acetyllysine; alternate modification is found at K10. S11 bears the Phosphoserine mark. At K15 the chain carries N6,N6-dimethyllysine; alternate. 5 positions are modified to N6-acetyllysine; alternate: K15, K19, K24, K28, and K37. K19, K24, K28, and K37 each carry N6-methyllysine; alternate. N6,N6,N6-trimethyllysine; alternate occurs at positions 28 and 37. N6,N6-dimethyllysine; alternate occurs at positions 28 and 37. An N6-acetyllysine mark is found at K57 and K65. K80 carries the N6,N6,N6-trimethyllysine; alternate modification. K80 carries the N6,N6-dimethyllysine; alternate modification. K80 is subject to N6-methyllysine; alternate.

The protein belongs to the histone H3 family. In terms of assembly, the nucleosome is a histone octamer containing two molecules each of H2A, H2B, H3 and H4 assembled in one H3-H4 heterotetramer and two H2A-H2B heterodimers. The octamer wraps approximately 147 bp of DNA. In terms of processing, phosphorylated at Ser-11. This is required for transcriptional activation through TBP recruitment to the promoters. Phosphorylation at Ser-11 also promotes subsequent acetylation at Lys-15. Post-translationally, mono-, di- and trimethylation of Lys-5 by the COMPASS complex activates gene expression by regulating transcription elongation and plays a role in telomere length maintenance. Lys-5 methylation enrichment correlates with transcription levels, and occurs in a 5' to 3' gradient with tri-methyl enrichment at the 5'-end of genes, shifting to di-methyl and then mono-methyl. The COMPASS mediated di and trimethylation of Lys-5 requires histone H2B monoubiquitination. Methylation of Lys-37 by SET2 represses gene expression. Methylation of Lys-80 by DOT1 is required for association of SIR proteins with telomeric regions and for telomeric silencing. Acetylation of histone H3 leads to transcriptional activation. Acetylation at Lys-15 is promoted by the phosphorylation at Ser-11. Acetylation at Lys-57 occurs predominantly in newly synthesized H3 molecule during G1, S and G2/M of the cell cycle and may be involved in DNA repair.

The protein resides in the nucleus. It localises to the chromosome. Functionally, core component of nucleosome. Nucleosomes wrap and compact DNA into chromatin, limiting DNA accessibility to the cellular machineries which require DNA as a template. Histones thereby play a central role in transcription regulation, DNA repair, DNA replication and chromosomal stability. DNA accessibility is regulated via a complex set of post-translational modifications of histones, also called histone code, and nucleosome remodeling. The protein is Histone H3.3 (HHT3) of Trichinella pseudospiralis (Parasitic roundworm).